The sequence spans 340 residues: GTP 3',8-cyclase (340 aa).

In terms of domain architecture, Radical SAM core spans 8–227 (KLGRPIRDLR…SMIQEEFDIE (220 aa)). R17 lines the GTP pocket. The [4Fe-4S] cluster site is built by C24 and C28. Y30 provides a ligand contact to S-adenosyl-L-methionine. Residue C31 participates in [4Fe-4S] cluster binding. R71 is a GTP binding site. G75 provides a ligand contact to S-adenosyl-L-methionine. A GTP-binding site is contributed by T102. S126 provides a ligand contact to S-adenosyl-L-methionine. K163 serves as a coordination point for GTP. S-adenosyl-L-methionine is bound at residue M197. Residues C261 and C264 each coordinate [4Fe-4S] cluster. Residue 266-268 (RAR) coordinates GTP. A [4Fe-4S] cluster-binding site is contributed by C278.

The protein belongs to the radical SAM superfamily. MoaA family. In terms of assembly, monomer and homodimer. [4Fe-4S] cluster serves as cofactor.

The enzyme catalyses GTP + AH2 + S-adenosyl-L-methionine = (8S)-3',8-cyclo-7,8-dihydroguanosine 5'-triphosphate + 5'-deoxyadenosine + L-methionine + A + H(+). The protein operates within cofactor biosynthesis; molybdopterin biosynthesis. In terms of biological role, catalyzes the cyclization of GTP to (8S)-3',8-cyclo-7,8-dihydroguanosine 5'-triphosphate. The sequence is that of GTP 3',8-cyclase from Staphylococcus carnosus (strain TM300).